The primary structure comprises 60 residues: Light-harvesting polypeptide B-885 alpha-2 chain (60 aa).

The Cytoplasmic portion of the chain corresponds to 1-16 (SAPAQWKLWLVMDPRT). The helical transmembrane segment at 17 to 37 (VMIGTAAWLGVLALLIHFLLL) threads the bilayer. His33 lines the a bacteriochlorophyll pocket. The Periplasmic portion of the chain corresponds to 38-60 (GTERFNWIDTGLKEQKATAAAQA).

The protein belongs to the antenna complex alpha subunit family. The core complex is formed by different alpha and beta chains, binding bacteriochlorophyll molecules, and arranged most probably in tetrameric structures disposed around the reaction center. The non-pigmented gamma chains may constitute additional components.

The protein localises to the cell inner membrane. Its function is as follows. Antenna complexes are light-harvesting systems, which transfer the excitation energy to the reaction centers. The polypeptide is Light-harvesting polypeptide B-885 alpha-2 chain (Rhodocyclus tenuis (Rhodospirillum tenue)).